We begin with the raw amino-acid sequence, 156 residues long: Small ribosomal subunit protein uS7c (156 aa).

The protein belongs to the universal ribosomal protein uS7 family. Part of the 30S ribosomal subunit.

It localises to the plastid. The protein localises to the chloroplast. In terms of biological role, one of the primary rRNA binding proteins, it binds directly to 16S rRNA where it nucleates assembly of the head domain of the 30S subunit. The sequence is that of Small ribosomal subunit protein uS7c (rps7) from Pyropia yezoensis (Susabi-nori).